The sequence spans 95 residues: Small ribosomal subunit protein uS19 (95 aa).

This sequence belongs to the universal ribosomal protein uS19 family.

In terms of biological role, protein S19 forms a complex with S13 that binds strongly to the 16S ribosomal RNA. The protein is Small ribosomal subunit protein uS19 of Lactobacillus gasseri (strain ATCC 33323 / DSM 20243 / BCRC 14619 / CIP 102991 / JCM 1131 / KCTC 3163 / NCIMB 11718 / NCTC 13722 / AM63).